The primary structure comprises 506 residues: MASSLLTSSGMIPTTGSTVVGRSVLPFQSSLHSLRLTHSYKNPALFISCCSSVSKNAATSSTDLKPAVERWPEYLPNKLPDENYVRVFDTTLRDGEQAPGGSLTPPQKLEIARQLAKLRVDIMEVGFPGSSEEELETVKTIAKTVGNEVDEETGYVPVICAIARSKHRDIEAAWEAVKYAKRPRILIFTSTSDIHMKYKLKKTQEEVIEMAVSSIRFAKSLGFNDIQLGCEDGGRSDKDFLCKILGEAIKADVTVVNVADTVGINMPHEYAELVTYLKANTPGIDDVVFSVHCHNDLGLATANSIAGIRAGARQVEVTINGIGERSGNASLEEVVMALKCRGAYVINGVYTRIDTRQIMATSKMVQEYTGLYVQAHKPIVGANCFVHESGIHQDGILKNRSTYEILSPEDIGIVKSQNSGLVLGKLSGRHAVKDRLKELGYELDDEKLNAVFSLFRDLTKNKKRITDADMKALVTSSDGISLEKSNGANGLKSNGYIPVLQVSSNV.

The N-terminal 49 residues, 1–49, are a transit peptide targeting the chloroplast; sequence MASSLLTSSGMIPTTGSTVVGRSVLPFQSSLHSLRLTHSYKNPALFISC. Positions 85–359 constitute a Pyruvate carboxyltransferase domain; sequence VRVFDTTLRD…YTRIDTRQIM (275 aa).

Belongs to the alpha-IPM synthase/homocitrate synthase family.

Its subcellular location is the plastid. The protein resides in the chloroplast. It carries out the reaction an omega-(methylsulfanyl)-2-oxoalkanoate + acetyl-CoA + H2O = a 2-(omega-methylsulfanyl)alkylmalate + CoA + H(+). In terms of biological role, catalyzes only the first methionine chain elongation cycle. This is Methylthioalkylmalate synthase 2, chloroplastic (MAM2) from Arabidopsis thaliana (Mouse-ear cress).